The primary structure comprises 84 residues: RQC P-site tRNA stabilizing factor (84 aa).

An S4 RNA-binding domain is found at 1–64 (MRIDKFLQSV…IEEYTILQIP (64 aa)).

Belongs to the RqcP family. Associates with stalled 50S ribosomal subunits. Binds to RqcH, 23S rRNA and the P-site tRNA. Does not require RqcH for association with 50S subunits.

Its function is as follows. Key component of the ribosome quality control system (RQC), a ribosome-associated complex that mediates the extraction of incompletely synthesized nascent chains from stalled ribosomes and their subsequent degradation. RqcH recruits Ala-charged tRNA, and with RqcP directs the elongation of stalled nascent chains on 50S ribosomal subunits, leading to non-templated C-terminal alanine extensions (Ala tail). The Ala tail promotes nascent chain degradation. RqcP is associated with the translocation-like movement of the peptidyl-tRNA from the A-site into the P-site. The protein is RQC P-site tRNA stabilizing factor of Helicobacter pylori (strain ATCC 700392 / 26695) (Campylobacter pylori).